A 346-amino-acid polypeptide reads, in one-letter code: MVDALREANTASQSERRETLLTPRFYTTDFEALAKLDISAMEADFEALLAEFQADYNREHFQRDAGFVEQAHQIDPQWRALMLEFLERSCTSEFSGFLLYKEISRRLKAANPLLAECFKAMSRDEARHAGFLNKAMGDYDLGLDLSNLAKQKKYTFFKPKFIFYATYLSEKIGYWRYIAIFRHLERHPENRIHPLFNYFKNWCQDENRHGDFFGLILKSQPQLLKGPINRLWVRFFLLSFCLTMYLNDRKPHNLYSALGLDASHYAMEVLRQTNLDSGKVFPLILDLDNPRFQRHLDRCADLNLQLEALSGKSPLARLPVIAALAGTIAQLFLLKPVAPPAPEMVR.

The protein belongs to the AcsF family. Fe cation serves as cofactor.

It carries out the reaction Mg-protoporphyrin IX 13-monomethyl ester + 3 NADPH + 3 O2 + 2 H(+) = 3,8-divinyl protochlorophyllide a + 3 NADP(+) + 5 H2O. It functions in the pathway porphyrin-containing compound metabolism; chlorophyll biosynthesis (light-independent). Its function is as follows. Catalyzes the formation of the isocyclic ring in chlorophyll biosynthesis. Mediates the cyclase reaction, which results in the formation of divinylprotochlorophyllide (Pchlide) characteristic of all chlorophylls from magnesium-protoporphyrin IX 13-monomethyl ester (MgPMME). This Gloeobacter violaceus (strain ATCC 29082 / PCC 7421) protein is Magnesium-protoporphyrin IX monomethyl ester [oxidative] cyclase.